The primary structure comprises 172 residues: Putative defense protein (172 aa).

Residues 1 to 21 (MKLVVAAVLAMAASRWRRLSA) form the signal peptide. Positions 22 to 172 (HGQVPSSTCA…LRQLDNAVAA (151 aa)) constitute a Reelin domain.

This sequence belongs to the insect defense protein family. In terms of tissue distribution, in adults, in hemolymph.

It is found in the secreted. May have antimicrobial activity. The chain is Putative defense protein from Locusta migratoria (Migratory locust).